Reading from the N-terminus, the 117-residue chain is Tyrosine-protein phosphatase 25 (117 aa).

Residues 1–117 form the Tyrosine-protein phosphatase domain; it reads WLMIIEQKCN…DLIGQSPIVV (117 aa). Aspartate 85 lines the substrate pocket.

The protein belongs to the protein-tyrosine phosphatase family.

The catalysed reaction is O-phospho-L-tyrosyl-[protein] + H2O = L-tyrosyl-[protein] + phosphate. In Styela plicata (Wrinkled sea squirt), this protein is Tyrosine-protein phosphatase 25 (STY-25).